Consider the following 704-residue polypeptide: Elongation factor G (704 aa).

The 281-residue stretch at Thr-10–Leu-290 folds into the tr-type G domain. Residues Ala-19–Thr-26, Asp-83–His-87, and Asn-137–Asp-140 each bind GTP.

Belongs to the TRAFAC class translation factor GTPase superfamily. Classic translation factor GTPase family. EF-G/EF-2 subfamily.

The protein resides in the cytoplasm. Catalyzes the GTP-dependent ribosomal translocation step during translation elongation. During this step, the ribosome changes from the pre-translocational (PRE) to the post-translocational (POST) state as the newly formed A-site-bound peptidyl-tRNA and P-site-bound deacylated tRNA move to the P and E sites, respectively. Catalyzes the coordinated movement of the two tRNA molecules, the mRNA and conformational changes in the ribosome. This Beutenbergia cavernae (strain ATCC BAA-8 / DSM 12333 / CCUG 43141 / JCM 11478 / NBRC 16432 / NCIMB 13614 / HKI 0122) protein is Elongation factor G.